Here is a 136-residue protein sequence, read N- to C-terminus: Large ribosomal subunit protein uL16 (136 aa).

This sequence belongs to the universal ribosomal protein uL16 family. In terms of assembly, part of the 50S ribosomal subunit.

Its function is as follows. Binds 23S rRNA and is also seen to make contacts with the A and possibly P site tRNAs. This Actinobacillus pleuropneumoniae serotype 5b (strain L20) protein is Large ribosomal subunit protein uL16.